The primary structure comprises 393 residues: S-adenosylmethionine synthase 1 (393 aa).

Mg(2+) is bound at residue Glu9. His15 lines the ATP pocket. K(+) is bound at residue Glu43. 2 residues coordinate L-methionine: Glu56 and Gln99. ATP is bound by residues 167–169, 235–238, Asp246, 252–253, Ala269, Lys273, and Lys277; these read DGK, SGRF, and RK. Asp246 is an L-methionine binding site. Residue Lys277 coordinates L-methionine.

The protein belongs to the AdoMet synthase family. As to quaternary structure, homotetramer. The cofactor is Mn(2+). Mg(2+) is required as a cofactor. Requires Co(2+) as cofactor. K(+) serves as cofactor.

The protein resides in the cytoplasm. The enzyme catalyses L-methionine + ATP + H2O = S-adenosyl-L-methionine + phosphate + diphosphate. It participates in amino-acid biosynthesis; S-adenosyl-L-methionine biosynthesis; S-adenosyl-L-methionine from L-methionine: step 1/1. Catalyzes the formation of S-adenosylmethionine from methionine and ATP. The reaction comprises two steps that are both catalyzed by the same enzyme: formation of S-adenosylmethionine (AdoMet) and triphosphate, and subsequent hydrolysis of the triphosphate. The chain is S-adenosylmethionine synthase 1 (METK1) from Solanum tuberosum (Potato).